We begin with the raw amino-acid sequence, 470 residues long: MEEHYYVSIDIGSSSVKTIVGEKFHNGINVIGTGQTYTSGIKNGLIDDFDIARQAIKDTIKKASIASGVDIKEVFLKLPIIGTEVYDESNEIDFYEDTEINGSHIEKVLEGIREKNDVQETEVINVFPIRFIVDKENEVSDPKELIARHSLKVEAGVIAIQKSILINMIKCVEACGVDVLDVYSDAYNYGSILTATEKELGACVIDIGEDVTQVAFYERGELVDADSIEMAGRDITDDIAQGLNTSYETAEKVKHQYGHAFYDSASDQDIFTVEQVDSDETVQYTQKDLSDFIEARVEEIFFEVFDVLQDLGLTKVNGGFIVTGGSANLLGVKELLSDMVSEKVRIHTPSQMGIRKPEFSSAISTISSSIAFDELLDYVTINYHDSEETEEDVIDVKDKDNESKLGGFDWFKRKTNKKDTHENEVESTDEEIYQSEDNHQEHKQNHEHVQDKDKDKEESKFKKLMKSLFE.

Residues 416–470 (NKKDTHENEVESTDEEIYQSEDNHQEHKQNHEHVQDKDKDKEESKFKKLMKSLFE) are disordered. The segment covering 425–434 (VESTDEEIYQ) has biased composition (acidic residues). Over residues 436 to 461 (EDNHQEHKQNHEHVQDKDKDKEESKF) the composition is skewed to basic and acidic residues.

This sequence belongs to the FtsA/MreB family. Self-interacts. Interacts with FtsZ.

The protein localises to the cell membrane. Functionally, cell division protein that is involved in the assembly of the Z ring. May serve as a membrane anchor for the Z ring. The sequence is that of Cell division protein FtsA from Staphylococcus aureus (strain MSSA476).